We begin with the raw amino-acid sequence, 132 residues long: Small ribosomal subunit protein uS8 (132 aa).

It belongs to the universal ribosomal protein uS8 family. Part of the 30S ribosomal subunit. Contacts proteins S5 and S12.

In terms of biological role, one of the primary rRNA binding proteins, it binds directly to 16S rRNA central domain where it helps coordinate assembly of the platform of the 30S subunit. This Xanthomonas axonopodis pv. citri (strain 306) protein is Small ribosomal subunit protein uS8.